The primary structure comprises 515 residues: E3 ubiquitin-protein ligase RNF38 (515 aa).

A Bipartite nuclear localization signal 1 motif is present at residues 57–71 (DSPSPKRQRLSHSVF). The segment at 73 to 141 (YTSASPAPSP…LSRHNSISQD (69 aa)) is disordered. Positions 89–104 (MTSNRQPPSVRPSQHH) are enriched in polar residues. The Bipartite nuclear localization signal 2 motif lies at 115-131 (RNRRSPPVRRQRGRRDR). The span at 115–134 (RNRRSPPVRRQRGRRDRLSR) shows a compositional bias: basic residues. An RING-type zinc finger spans residues 463-504 (CVVCMCDFESRQLLRVLPCNHEFHAKCVDKWLKANRTCPICR).

Widely expressed with highest levels in testis.

It localises to the nucleus. The catalysed reaction is S-ubiquitinyl-[E2 ubiquitin-conjugating enzyme]-L-cysteine + [acceptor protein]-L-lysine = [E2 ubiquitin-conjugating enzyme]-L-cysteine + N(6)-ubiquitinyl-[acceptor protein]-L-lysine.. Its pathway is protein modification; protein ubiquitination. Acts as an E3 ubiquitin-protein ligase able to ubiquitinate p53/TP53 which promotes its relocalization to discrete foci associated with PML nuclear bodies. Exhibits preference for UBE2D2 as a E2 enzyme. The sequence is that of E3 ubiquitin-protein ligase RNF38 from Homo sapiens (Human).